A 519-amino-acid chain; its full sequence is Mannosyl-oligosaccharide alpha-1,2-mannosidase (519 aa).

An N-terminal signal peptide occupies residues 1–22; sequence MKGSPVLAVCAAALTLIPSVVA. The N-linked (GlcNAc...) asparagine glycan is linked to Asn187. The cysteines at positions 337 and 366 are disulfide-linked. Residue Glu380 is the Proton donor of the active site. N-linked (GlcNAc...) asparagine glycosylation occurs at Asn443. Thr507 provides a ligand contact to Ca(2+).

This sequence belongs to the glycosyl hydrolase 47 family. In terms of assembly, monomer. Requires Ca(2+) as cofactor. The cofactor is Mg(2+).

The protein resides in the secreted. The catalysed reaction is N(4)-(alpha-D-Man-(1-&gt;2)-alpha-D-Man-(1-&gt;2)-alpha-D-Man-(1-&gt;3)-[alpha-D-Man-(1-&gt;2)-alpha-D-Man-(1-&gt;3)-[alpha-D-Man-(1-&gt;2)-alpha-D-Man-(1-&gt;6)]-alpha-D-Man-(1-&gt;6)]-beta-D-Man-(1-&gt;4)-beta-D-GlcNAc-(1-&gt;4)-beta-D-GlcNAc)-L-asparaginyl-[protein] (N-glucan mannose isomer 9A1,2,3B1,2,3) + 4 H2O = N(4)-(alpha-D-Man-(1-&gt;3)-[alpha-D-Man-(1-&gt;3)-[alpha-D-Man-(1-&gt;6)]-alpha-D-Man-(1-&gt;6)]-beta-D-Man-(1-&gt;4)-beta-D-GlcNAc-(1-&gt;4)-beta-D-GlcNAc)-L-asparaginyl-[protein] (N-glucan mannose isomer 5A1,2) + 4 beta-D-mannose. The enzyme catalyses N(4)-(alpha-D-Man-(1-&gt;2)-alpha-D-Man-(1-&gt;2)-alpha-D-Man-(1-&gt;3)-[alpha-D-Man-(1-&gt;3)-[alpha-D-Man-(1-&gt;2)-alpha-D-Man-(1-&gt;6)]-alpha-D-Man-(1-&gt;6)]-beta-D-Man-(1-&gt;4)-beta-D-GlcNAc-(1-&gt;4)-beta-D-GlcNAc)-L-asparaginyl-[protein] (N-glucan mannose isomer 8A1,2,3B1,3) + 3 H2O = N(4)-(alpha-D-Man-(1-&gt;3)-[alpha-D-Man-(1-&gt;3)-[alpha-D-Man-(1-&gt;6)]-alpha-D-Man-(1-&gt;6)]-beta-D-Man-(1-&gt;4)-beta-D-GlcNAc-(1-&gt;4)-beta-D-GlcNAc)-L-asparaginyl-[protein] (N-glucan mannose isomer 5A1,2) + 3 beta-D-mannose. Its pathway is protein modification; protein glycosylation. Functionally, alpha-mannosidase involved in the maturation of Asn-linked oligosaccharides. Progressively trims alpha-1,2-linked mannose residues from Man(9)GlcNAc(2) to produce Man(5)GlcNAc(2). The sequence is that of Mannosyl-oligosaccharide alpha-1,2-mannosidase from Coccidioides posadasii (strain RMSCC 757 / Silveira) (Valley fever fungus).